Here is a 405-residue protein sequence, read N- to C-terminus: Nuclear RNA export factor 2 (405 aa).

Residues 1–33 are disordered; the sequence is MRGQNRRGYRNIEGRLSLSSHSSHSSPRQTHVT. The span at 16-26 shows a compositional bias: low complexity; the sequence is LSLSSHSSHSS. The RRM domain maps to 26–94; it reads SPRQTHVTNL…SVVLQHIGYK (69 aa). LRR repeat units lie at residues 97–118 and 123–144; these read RISG…SSLS and FLKF…KKLG. One can recognise an NTF2 domain in the interval 215–382; it reads LVEEFIITYY…VAIVSDQLFI (168 aa).

The protein belongs to the NXF family.

The protein resides in the nucleus. Functionally, involved in the export of cellular mRNA to the cytoplasm. Plays a role in the nuclear retention of unspliced mRNAs. The polypeptide is Nuclear RNA export factor 2 (Caenorhabditis elegans).